Here is a 212-residue protein sequence, read N- to C-terminus: UPF0502 protein ECA2523 (212 aa).

It belongs to the UPF0502 family.

The polypeptide is UPF0502 protein ECA2523 (Pectobacterium atrosepticum (strain SCRI 1043 / ATCC BAA-672) (Erwinia carotovora subsp. atroseptica)).